The sequence spans 233 residues: Gamma-glutamyl-hercynylcysteine sulfoxide hydrolase (233 aa).

The Nucleophile role is filled by cysteine 2. The Glutamine amidotransferase type-2 domain maps to 2–233; the sequence is CRHLGWLGAQ…TALDRAKGPR (232 aa).

It catalyses the reaction gamma-L-glutamyl-hercynylcysteine S-oxide + H2O = S-(hercyn-2-yl)-L-cysteine S-oxide + L-glutamate. The protein operates within amino-acid biosynthesis; ergothioneine biosynthesis. In terms of biological role, catalyzes the hydrolysis of the gamma-glutamyl amide bond of hercynyl-gamma-L-glutamyl-L-cysteine sulfoxide to produce hercynylcysteine sulfoxide, a step in the biosynthesis pathway of ergothioneine. Ergothioneine is an antioxidant that protects mycobacteria from oxidative stress. The chain is Gamma-glutamyl-hercynylcysteine sulfoxide hydrolase (egtC) from Mycobacterium tuberculosis (strain ATCC 25618 / H37Rv).